A 541-amino-acid polypeptide reads, in one-letter code: Protein wntless homolog (541 aa).

Topologically, residues methionine 1–cysteine 15 are cytoplasmic. The chain crosses the membrane as a helical span at residues isoleucine 16–alanine 36. At proline 37–lysine 232 the chain is on the lumenal side. Residues methionine 101–lysine 232 are interaction with Wnt proteins. The helical transmembrane segment at valine 233–tryptophan 253 threads the bilayer. The Cytoplasmic segment spans residues arginine 254–lysine 268. The helical transmembrane segment at valine 269–isoleucine 289 threads the bilayer. Residues glycine 290–arginine 303 lie on the Lumenal side of the membrane. Residues glutamine 304 to methionine 324 traverse the membrane as a helical segment. Residues aspartate 325–histidine 331 lie on the Cytoplasmic side of the membrane. The helical transmembrane segment at isoleucine 332–phenylalanine 352 threads the bilayer. Residues aspartate 353–alanine 380 lie on the Lumenal side of the membrane. Residues phenylalanine 381–phenylalanine 401 form a helical membrane-spanning segment. Residues glutamine 402–arginine 431 are Cytoplasmic-facing. A helical transmembrane segment spans residues phenylalanine 432–valine 452. Topologically, residues serine 453–serine 471 are lumenal. A helical transmembrane segment spans residues alanine 472 to tyrosine 492. The Cytoplasmic segment spans residues alanine 493–glutamate 541.

It belongs to the wntless family. In terms of assembly, interacts with WNT3A. Interacts with WNT1, WNT3 and WNT5. N-glycosylated. In terms of tissue distribution, expressed in the brain, skeletal muscle, heart muscle, lung, gut, liver, and kidney (at protein level). In the brain, expressed in the cortex, striatum, hippocampus and to a lesser extent in the cerebellum (at protein level). Expressed in kidney, lung, skin, intestine, brain, spinal cord, skeleton, eyes, excretion glands, tooth and palatal shelves. In the cerebellum, expressed in Purkinje cells.

The protein localises to the golgi apparatus membrane. The protein resides in the cytoplasmic vesicle membrane. Its subcellular location is the cell membrane. It localises to the endoplasmic reticulum membrane. It is found in the early endosome membrane. Functionally, regulates Wnt proteins sorting and secretion in a feedback regulatory mechanism. This reciprocal interaction plays a key role in the regulation of expression, subcellular location, binding and organelle-specific association of Wnt proteins. Also plays an important role in establishment of the anterior-posterior body axis formation during development. This Mus musculus (Mouse) protein is Protein wntless homolog (Wls).